Consider the following 303-residue polypeptide: ATP phosphoribosyltransferase (303 aa).

Belongs to the ATP phosphoribosyltransferase family. Long subfamily. Mg(2+) is required as a cofactor.

The protein localises to the cytoplasm. The catalysed reaction is 1-(5-phospho-beta-D-ribosyl)-ATP + diphosphate = 5-phospho-alpha-D-ribose 1-diphosphate + ATP. It participates in amino-acid biosynthesis; L-histidine biosynthesis; L-histidine from 5-phospho-alpha-D-ribose 1-diphosphate: step 1/9. With respect to regulation, feedback inhibited by histidine. Functionally, catalyzes the condensation of ATP and 5-phosphoribose 1-diphosphate to form N'-(5'-phosphoribosyl)-ATP (PR-ATP). Has a crucial role in the pathway because the rate of histidine biosynthesis seems to be controlled primarily by regulation of HisG enzymatic activity. The polypeptide is ATP phosphoribosyltransferase (Haemophilus influenzae (strain 86-028NP)).